Here is a 297-residue protein sequence, read N- to C-terminus: 3-mercaptopyruvate sulfurtransferase (297 aa).

An N-acetylalanine modification is found at Ala-2. The 120-residue stretch at 25-144 folds into the Rhodanese 1 domain; sequence ASQPLKLLDA…WLSQNLPISS (120 aa). Ser-35 carries the phosphoserine modification. The residue at position 40 (Lys-40) is an N6-acetyllysine; alternate. N6-succinyllysine; alternate is present on Lys-40. The interval 145-160 is hinge; sequence GKSPSEPAEFCAQLDP. Lys-146 and Lys-164 each carry N6-succinyllysine. A Rhodanese 2 domain is found at 174–288; sequence DARRFQVVDA…WYMRAQPEHV (115 aa). Residue Arg-188 coordinates substrate. The active-site Cysteine persulfide intermediate is Cys-248.

Monomer (active form). Homodimer; disulfide-linked (inactive form). Post-translationally, the N-terminus is blocked. Expressed in liver, heart, kidney and brain. Localizes to tubular epithelium in the kidney, pericentral hepatocytes in the liver, cardiac cells in the heart and neuroglial cells in the brain. Also expressed in vascular endothelium of the thoracic aorta. Weak expression in lung and thymus.

The protein resides in the cytoplasm. It localises to the mitochondrion. The protein localises to the synapse. Its subcellular location is the synaptosome. The catalysed reaction is 2-oxo-3-sulfanylpropanoate + [thioredoxin]-dithiol = [thioredoxin]-disulfide + hydrogen sulfide + pyruvate + H(+). By oxidative stress, and thioredoxin. Under oxidative stress conditions, the catalytic cysteine site is converted to a sulfenate which inhibits the MPST enzyme activity. Reduced thioredoxin cleaves an intersubunit disulfide bond to turn on the redox switch and reactivate the enzyme. Inhibited by different oxidants, hydrogen peroxide and tetrathionate. Functionally, transfer of a sulfur ion to cyanide or to other thiol compounds. Also has weak rhodanese activity. Detoxifies cyanide and is required for thiosulfate biosynthesis. Acts as an antioxidant. In combination with cysteine aminotransferase (CAT), contributes to the catabolism of cysteine and is an important producer of hydrogen sulfide in the brain, retina and vascular endothelial cells. Hydrogen sulfide H(2)S is an important synaptic modulator, signaling molecule, smooth muscle contractor and neuroprotectant. Its production by the 3MST/CAT pathway is regulated by calcium ions. In Rattus norvegicus (Rat), this protein is 3-mercaptopyruvate sulfurtransferase (Mpst).